A 94-amino-acid polypeptide reads, in one-letter code: Probable Fe(2+)-trafficking protein (94 aa).

The protein belongs to the Fe(2+)-trafficking protein family.

Functionally, could be a mediator in iron transactions between iron acquisition and iron-requiring processes, such as synthesis and/or repair of Fe-S clusters in biosynthetic enzymes. The protein is Probable Fe(2+)-trafficking protein of Haemophilus ducreyi (strain 35000HP / ATCC 700724).